A 428-amino-acid polypeptide reads, in one-letter code: Beta-1,3-galactosyl-O-glycosyl-glycoprotein beta-1,6-N-acetylglucosaminyltransferase (428 aa).

The Cytoplasmic segment spans residues 1-9; it reads MLRTLLRRR. The tract at residues 5–9 is mediates interaction with GOLPH3 and is necessary and sufficient for localization to the Golgi; that stretch reads LLRRR. The helical; Signal-anchor for type II membrane protein transmembrane segment at 10 to 32 threads the bilayer; the sequence is LFSYPTKYYFMVLVLSLITFSVL. The interval 33–121 is stem region; it reads RIHQKPEFVS…EPLSKEEAEF (89 aa). The Lumenal segment spans residues 33–428; the sequence is RIHQKPEFVS…RHKALETLKH (396 aa). 2 N-linked (GlcNAc...) asparagine glycosylation sites follow: Asn-58 and Asn-95. Intrachain disulfides connect Cys-59-Cys-413, Cys-100-Cys-172, Cys-151-Cys-199, and Cys-372-Cys-381. The tract at residues 122–428 is catalytic; that stretch reads PIAYSIVVHH…RHKALETLKH (307 aa). Residues 128–130, 155–157, and Tyr-187 contribute to the UDP-N-acetyl-alpha-D-glucosamine site; these read VVH and DTK. A glycoprotein is bound by residues Glu-243, Lys-251, Arg-254, Glu-320, Lys-341, and Tyr-358. The Nucleophile role is filled by Glu-320. Residues Arg-378 and Lys-401 each contribute to the UDP-N-acetyl-alpha-D-glucosamine site.

Belongs to the glycosyltransferase 14 family. Interacts with GOLPH3; may control GCNT1 retention in the Golgi. As to expression, highly expressed in activated T-lymphocytes and myeloid cells.

It localises to the golgi apparatus membrane. It catalyses the reaction a 3-O-[beta-D-galactosyl-(1-&gt;3)-N-acetyl-alpha-D-galactosaminyl]-L-seryl-[protein] + UDP-N-acetyl-alpha-D-glucosamine = 3-O-{beta-D-galactosyl-(1-&gt;3)-[N-acetyl-beta-D-glucosaminyl-(1-&gt;6)]-N-acetyl-alpha-D-galactosaminyl}-L-seryl-[protein] + UDP + H(+). It carries out the reaction a 3-O-[beta-D-galactosyl-(1-&gt;3)-N-acetyl-alpha-D-galactosaminyl]-L-threonyl-[protein] + UDP-N-acetyl-alpha-D-glucosamine = a 3-O-{beta-D-galactosyl-(1-&gt;3)-[N-acetyl-beta-D-glucosaminyl-(1-&gt;6)]-N-acetyl-alpha-D-galactosaminyl}-L-threonyl-[protein] + UDP + H(+). The enzyme catalyses a globoside GalGb4Cer + UDP-N-acetyl-alpha-D-glucosamine = a globoside GlcNAc-(beta1-&gt;6)-GalGb4Cer + UDP + H(+). The catalysed reaction is a ganglioside GA1 + UDP-N-acetyl-alpha-D-glucosamine = a ganglioside beta-D-GlcNAc-(1-&gt;6)-GA1 + UDP + H(+). The protein operates within protein modification; protein glycosylation. Its pathway is glycolipid biosynthesis. Functionally, glycosyltransferase that catalyzes the transfer of an N-acetylglucosamine (GlcNAc) moiety in beta1-6 linkage from UDP-GlcNAc onto mucin-type core 1 O-glycan to form the branched mucin-type core 2 O-glycan. The catalysis is metal ion-independent and occurs with inversion of the anomeric configuration of sugar donor. Selectively involved in synthesis of mucin-type core 2 O-glycans that serve as scaffolds for the display of selectin ligand sialyl Lewis X epitope by myeloid cells, with an impact on homeostasis and recruitment to inflammatory sites. Can also act on glycolipid substrates. Transfers GlcNAc moiety to GalGb4Cer globosides in a reaction step to the synthesis of stage-specific embryonic antigen 1 (SSEA-1) determinant. Can use Galbeta1-3GalNAcalpha1- and Galbeta1-3GalNAcbeta1- oligosaccharide derivatives as acceptor substrates. In Homo sapiens (Human), this protein is Beta-1,3-galactosyl-O-glycosyl-glycoprotein beta-1,6-N-acetylglucosaminyltransferase (GCNT1).